The chain runs to 102 residues: NADH-quinone oxidoreductase subunit K (102 aa).

The next 3 helical transmembrane spans lie at 5-25 (LAHY…GIFV), 30-50 (IIVI…NLVA), and 62-82 (IFAM…LAIL).

This sequence belongs to the complex I subunit 4L family. In terms of assembly, NDH-1 is composed of 14 different subunits. Subunits NuoA, H, J, K, L, M, N constitute the membrane sector of the complex.

The protein localises to the cell inner membrane. The catalysed reaction is a quinone + NADH + 5 H(+)(in) = a quinol + NAD(+) + 4 H(+)(out). In terms of biological role, NDH-1 shuttles electrons from NADH, via FMN and iron-sulfur (Fe-S) centers, to quinones in the respiratory chain. The immediate electron acceptor for the enzyme in this species is believed to be ubiquinone. Couples the redox reaction to proton translocation (for every two electrons transferred, four hydrogen ions are translocated across the cytoplasmic membrane), and thus conserves the redox energy in a proton gradient. The protein is NADH-quinone oxidoreductase subunit K of Phenylobacterium zucineum (strain HLK1).